Reading from the N-terminus, the 390-residue chain is GTPase Obg (390 aa).

One can recognise an Obg domain in the interval 1–159 (MKFVDEAVIR…RHLRLELLLL (159 aa)). A disordered region spans residues 22-42 (SFRTEKYVPRGGPDGGDGGDG). Residues 33 to 42 (GPDGGDGGDG) show a composition bias toward gly residues. The OBG-type G domain maps to 160–333 (ADVGMLGLPN…LTYNLMTTIE (174 aa)). GTP-binding positions include 166 to 173 (GLPNAGKS), 191 to 195 (FTTLI), 213 to 216 (DIPG), 283 to 286 (NKVD), and 314 to 316 (SAL). Mg(2+)-binding residues include Ser-173 and Thr-193.

Belongs to the TRAFAC class OBG-HflX-like GTPase superfamily. OBG GTPase family. As to quaternary structure, monomer. The cofactor is Mg(2+).

It is found in the cytoplasm. Functionally, an essential GTPase which binds GTP, GDP and possibly (p)ppGpp with moderate affinity, with high nucleotide exchange rates and a fairly low GTP hydrolysis rate. Plays a role in control of the cell cycle, stress response, ribosome biogenesis and in those bacteria that undergo differentiation, in morphogenesis control. This chain is GTPase Obg, found in Photobacterium profundum (strain SS9).